Here is a 375-residue protein sequence, read N- to C-terminus: Thiamine-phosphate synthase (375 aa).

The interval 1–127 (MTNAESRTVL…AACIESIRYQ (127 aa)) is unknown. Residues 128–375 (CYATFRELEL…SSDVCPLPND (248 aa)) are thiamine-phosphate synthase. Residues 183–185 (QLR) and asparagine 215 contribute to the 4-amino-2-methyl-5-(diphosphooxymethyl)pyrimidine site. Mg(2+) contacts are provided by aspartate 216 and glutamate 235. 4-amino-2-methyl-5-(diphosphooxymethyl)pyrimidine contacts are provided by serine 254 and lysine 283. Glycine 315 provides a ligand contact to 2-[(2R,5Z)-2-carboxy-4-methylthiazol-5(2H)-ylidene]ethyl phosphate.

The protein belongs to the thiamine-phosphate synthase family. Requires Mg(2+) as cofactor.

It carries out the reaction 2-[(2R,5Z)-2-carboxy-4-methylthiazol-5(2H)-ylidene]ethyl phosphate + 4-amino-2-methyl-5-(diphosphooxymethyl)pyrimidine + 2 H(+) = thiamine phosphate + CO2 + diphosphate. It catalyses the reaction 2-(2-carboxy-4-methylthiazol-5-yl)ethyl phosphate + 4-amino-2-methyl-5-(diphosphooxymethyl)pyrimidine + 2 H(+) = thiamine phosphate + CO2 + diphosphate. The catalysed reaction is 4-methyl-5-(2-phosphooxyethyl)-thiazole + 4-amino-2-methyl-5-(diphosphooxymethyl)pyrimidine + H(+) = thiamine phosphate + diphosphate. Its pathway is cofactor biosynthesis; thiamine diphosphate biosynthesis; thiamine phosphate from 4-amino-2-methyl-5-diphosphomethylpyrimidine and 4-methyl-5-(2-phosphoethyl)-thiazole: step 1/1. Its function is as follows. Condenses 4-methyl-5-(beta-hydroxyethyl)thiazole monophosphate (THZ-P) and 2-methyl-4-amino-5-hydroxymethyl pyrimidine pyrophosphate (HMP-PP) to form thiamine monophosphate (TMP). The chain is Thiamine-phosphate synthase (thiE) from Rhodopirellula baltica (strain DSM 10527 / NCIMB 13988 / SH1).